Here is an 89-residue protein sequence, read N- to C-terminus: Toxin To14 (89 aa).

The signal sequence occupies residues 1-19; that stretch reads MNCLMLIFVVFLLAFGVEC. In terms of domain architecture, LCN-type CS-alpha/beta spans 21 to 85; it reads KDDYPVDTAK…SPTKTSGRCN (65 aa). 4 disulfide bridges follow: Cys-33-Cys-84, Cys-37-Cys-60, Cys-46-Cys-67, and Cys-50-Cys-69.

As to expression, expressed by the venom gland.

The protein resides in the secreted. Functionally, inhibits voltage-gated sodium channels (Nav). This Tityus obscurus (Amazonian scorpion) protein is Toxin To14.